A 567-amino-acid polypeptide reads, in one-letter code: MLRSALLSAVLPLLRAQPFPCPKTCKCVVRDAAQCSGGSVAHIAELGLPTNLTHILLFRMDQGILRNHSFSGMTVLQRQMLSDSHISAIDPGTFNDLVKLKTLRLTRNKISRLPRAILDKMVLLEQLFLDHNALRDLDQNLFQQLRNLQELGLNQNQLSFLPANLFSSLRELKLLDLSRNNLTHLPKGLLGAQVKLEKLLLYSNQLTSVDSGLLSNLGALTELRLERNHLRSVAPGAFDRLGNLSSLTLSGNLLESLPPALFLHVSSVSRLTLFENPLEELPDVLFGEMAGLRELWLNGTHLSTLPAAAFRNLSGLQTLGLTRNPRLSALPRGVFQGLRELRVLGLHTNALAELRDDALRGLGHLRQVSLRHNRLRALPRTLFRNLSSLESVQLEHNQLETLPGDVFAALPQLTQVLLGHNPWLCDCGLWRFLQWLRHHPDILGRDEPPQCRGPEPRASLSFWELLQGDPWCPDPRSLPLDPPTENALEAPVPSWLPNSWQSQTWAQLVARGESPNNRLYWGLYILLLVAQAIIAAFIVFAMIKIGQLFRTLIREKLLLEAMGKSCN.

Residues 1–16 (MLRSALLSAVLPLLRA) form the signal peptide. One can recognise an LRRNT domain in the interval 17 to 50 (QPFPCPKTCKCVVRDAAQCSGGSVAHIAELGLPT). Residues 17–522 (QPFPCPKTCK…ESPNNRLYWG (506 aa)) lie on the Extracellular side of the membrane. N51 and N67 each carry an N-linked (GlcNAc...) asparagine glycan. LRR repeat units follow at residues 75-96 (VLQR…TFND), 99-120 (KLKT…ILDK), 123-144 (LLEQ…LFQQ), 147-168 (NLQE…LFSS), 171-193 (ELKL…LGAQ), 195-216 (KLEK…LLSN), 219-240 (ALTE…AFDR), 243-264 (NLSS…LFLH), 267-288 (SVSR…LFGE), 291-312 (GLRE…AFRN), 315-337 (GLQT…VFQG), 340-361 (ELRV…ALRG), 364-385 (HLRQ…LFRN), and 388-409 (SLES…VFAA). The N-linked (GlcNAc...) asparagine glycan is linked to N181. Residue N243 is glycosylated (N-linked (GlcNAc...) asparagine). N-linked (GlcNAc...) asparagine glycosylation is found at N298 and N312. N-linked (GlcNAc...) asparagine glycosylation occurs at N385. Residues 421-474 (NPWLCDCGLWRFLQWLRHHPDILGRDEPPQCRGPEPRASLSFWELLQGDPWCPD) enclose the LRRCT domain. The helical transmembrane segment at 523-543 (LYILLLVAQAIIAAFIVFAMI) threads the bilayer. Topologically, residues 544 to 567 (KIGQLFRTLIREKLLLEAMGKSCN) are cytoplasmic.

The protein resides in the membrane. In terms of biological role, the GPIb-V-IX complex functions as the vWF receptor and mediates vWF-dependent platelet adhesion to blood vessels. The adhesion of platelets to injured vascular surfaces in the arterial circulation is a critical initiating event in hemostasis. The chain is Platelet glycoprotein V (Gp5) from Mus musculus (Mouse).